The primary structure comprises 462 residues: Citrate synthase, mitochondrial (462 aa).

A mitochondrion-targeting transit peptide spans 1-21 (MRSINQLLKQASLSQKSQYNF). Residues His-300, His-346, and Asp-401 contribute to the active site.

The protein belongs to the citrate synthase family. As to quaternary structure, homodimer.

It is found in the mitochondrion matrix. The protein localises to the cytoplasm. The protein resides in the cytoskeleton. The catalysed reaction is oxaloacetate + acetyl-CoA + H2O = citrate + CoA + H(+). Its pathway is carbohydrate metabolism; tricarboxylic acid cycle; isocitrate from oxaloacetate: step 1/2. Functionally, structural protein involved in oral morphogenesis and in pronuclear behavior during conjugation. Respiratory enzyme. This Tetrahymena thermophila protein is Citrate synthase, mitochondrial.